The sequence spans 177 residues: Large ribosomal subunit protein eL20 (177 aa).

It belongs to the eukaryotic ribosomal protein eL20 family.

In Spodoptera frugiperda (Fall armyworm), this protein is Large ribosomal subunit protein eL20 (RpL18A).